A 181-amino-acid polypeptide reads, in one-letter code: MSRIGKRPIALPAKVEVQIEGQQISVKGPKGELSRSLPPLIAVHQEAQTLKVSRVNESRPARQLHGLCRTLVANMVDGVSRGFERRLELVGVGYRASTQGNKLILNVGYSHPVEIPFPPGIQIAVEGNNVIVVSGIDKELVGNTAARIRAVRPPEPYKGKGIRYVGEQVRRKAGKSGKAKK.

The protein belongs to the universal ribosomal protein uL6 family. In terms of assembly, part of the 50S ribosomal subunit.

Functionally, this protein binds to the 23S rRNA, and is important in its secondary structure. It is located near the subunit interface in the base of the L7/L12 stalk, and near the tRNA binding site of the peptidyltransferase center. This is Large ribosomal subunit protein uL6 from Synechococcus sp. (strain JA-3-3Ab) (Cyanobacteria bacterium Yellowstone A-Prime).